The following is an 89-amino-acid chain: Large ribosomal subunit protein eL34 (89 aa).

The interval 1–22 is disordered; sequence MPAPRYKSGSSKKVYRKAPGNS.

This sequence belongs to the eukaryotic ribosomal protein eL34 family.

The sequence is that of Large ribosomal subunit protein eL34 from Methanococcus maripaludis (strain C7 / ATCC BAA-1331).